The following is a 632-amino-acid chain: uncharacterized protein (632 aa).

This sequence belongs to the MG032/MG096/MG288 family.

This is an uncharacterized protein from Mycoplasma pneumoniae (strain ATCC 29342 / M129 / Subtype 1) (Mycoplasmoides pneumoniae).